A 1264-amino-acid chain; its full sequence is Protein fantom (1264 aa).

Coiled coils occupy residues 64-143, 196-268, 299-454, and 488-555; these read LKQH…LQVQ, YSNS…NVET, LRIS…ESDI, and NKDL…VHLL. C2 domains lie at 577-714 and 773-897; these read KQYK…FCTT and AATT…SGIF. 2 disordered regions span residues 979 to 1018 and 1047 to 1093; these read DTIS…YPSK and QLAS…NTKQ. Positions 1056–1080 are enriched in acidic residues; it reads SEDETEITEELEPEDEDRSASDSDD.

The protein belongs to the RPGRIP1 family. Interacts with NPHP4 and NPHP1; NPHP1, NPHP4 and RPGRIP1L are proposed to form a functional NPHP1-4-8 module localized to cell-cell contacts and the ciliary transition zone; NPHP4 mediates the interaction between NPHP1 and RPGRIP1L. Interacts with IQCB1; the interaction likely requires additional interactors. Interacts with TBXA2R (via C-terminus), RPGR, NEK4. Interacts with NPHP4, INVS and DVL2; proposed to form a complex involved in DVL2 stabilization. Interacts with PSMD2. Ubiquitously expressed. Not found in heart and skin.

The protein localises to the cytoplasm. The protein resides in the cytoskeleton. It is found in the cilium basal body. It localises to the cilium axoneme. Its subcellular location is the microtubule organizing center. The protein localises to the centrosome. The protein resides in the cell junction. It is found in the tight junction. Its function is as follows. Negatively regulates signaling through the G-protein coupled thromboxane A2 receptor (TBXA2R). May be involved in mechanisms like programmed cell death, craniofacial development, patterning of the limbs, and formation of the left-right axis. Involved in the organization of apical junctions; the function is proposed to implicate a NPHP1-4-8 module. Does not seem to be strictly required for ciliogenesis. Involved in establishment of planar cell polarity such as in cochlear sensory epithelium and is proposed to implicate stabilization of disheveled proteins. Involved in regulation of proteasomal activity at the primary cilium probably implicating association with PSDM2. This is Protein fantom (Rpgrip1l) from Mus musculus (Mouse).